We begin with the raw amino-acid sequence, 687 residues long: Chloride channel protein ClC-Ka (687 aa).

Transmembrane regions (helical) follow at residues 52–72, 161–181, 202–222, and 236–256; these read FLMT…FALG, LFLG…AYLG, VAGA…GVLF, and YWRG…LAVF. Ca(2+) is bound by residues E259, E261, D278, and E281. A run of 6 helical transmembrane segments spans residues 282–302, 325–345, 396–416, 417–437, 452–472, and 486–506; these read IFFF…YLYC, PLYA…PGVG, FTIF…LILA, TTIP…AAIG, IVAG…AGAA, and LLAF…MAVL. At 507-687 the chain is on the cytoplasmic side; sequence AANAIAQSCQ…SALTNPPPAK (181 aa). 2 CBS domains span residues 551–612 and 628–686; these read MRRA…ARAS and TEPV…PPPA.

Belongs to the chloride channel (TC 2.A.49) family. CLCNKA subfamily. Homodimer. Interacts with BSND. As to expression, expressed predominantly in the kidney.

The protein resides in the basolateral cell membrane. The enzyme catalyses chloride(in) = chloride(out). The catalysed reaction is bromide(in) = bromide(out). It carries out the reaction nitrate(in) = nitrate(out). It catalyses the reaction iodide(out) = iodide(in). Anion-selective channel permeable to small monovalent anions with ion selectivity for chloride &gt; bromide &gt; nitrate &gt; iodide. Forms a homodimeric channel where each subunit has its own ion conduction pathway. May conduct double-barreled currents controlled by two types of gates, two fast gates that control each subunit independently and a slow common gate that opens and shuts off both subunits simultaneously. Assembles with the regulatory subunit BSND/Barttin for sorting at the basolateral plasma membrane domain and functional switch to the ion conducting state. CLCNKA:BSND channels display mostly a linear current-voltage relationship with fast gating at negative potentials. Mediates transepithelial chloride transport from the lumen to interstitial compartment along the thin ascending limb of Henle's loop, contributing to generation of hypertonic medullary interstitium as a countercurrent system to achieve urine concentration. Conducts chloride currents in the stria vascularis of the inner ear to establish the endocochlear potential necessary for normal hearing. The polypeptide is Chloride channel protein ClC-Ka (CLCNKA) (Oryctolagus cuniculus (Rabbit)).